The sequence spans 179 residues: Adenine phosphoribosyltransferase (179 aa).

This sequence belongs to the purine/pyrimidine phosphoribosyltransferase family. In terms of assembly, homodimer.

It localises to the cytoplasm. It catalyses the reaction AMP + diphosphate = 5-phospho-alpha-D-ribose 1-diphosphate + adenine. The protein operates within purine metabolism; AMP biosynthesis via salvage pathway; AMP from adenine: step 1/1. Catalyzes a salvage reaction resulting in the formation of AMP, that is energically less costly than de novo synthesis. This Dinoroseobacter shibae (strain DSM 16493 / NCIMB 14021 / DFL 12) protein is Adenine phosphoribosyltransferase.